Consider the following 146-residue polypeptide: CysO-cysteine peptidase (146 aa).

The 124-residue stretch at 11 to 134 (LVIRADLVNA…LRSYRIVDGA (124 aa)) folds into the MPN domain. Zn(2+) is bound by residues H88, H90, and D101. The JAMM motif motif lies at 88 to 101 (HSHTATEAYPSRTD).

It belongs to the peptidase M67A family. It depends on Zn(2+) as a cofactor.

It carries out the reaction [CysO sulfur-carrier protein]-Gly-NH-CH2-C(O)-S-L-Cys + H2O = [CysO sulfur-carrier protein]-C-terminal Gly-Gly + L-cysteine + H(+). It participates in amino-acid biosynthesis; L-cysteine biosynthesis. Protease that hydrolyzes the covalent CysO-cysteine adduct synthesized by CysM to release L-cysteine and regenerate CysO. The protein is CysO-cysteine peptidase (mec) of Mycobacterium bovis (strain ATCC BAA-935 / AF2122/97).